A 191-amino-acid chain; its full sequence is Putative NADH dehydrogenase/NAD(P)H nitroreductase (191 aa).

127–132 is an NAD(+) binding site; sequence AAHSLG.

It belongs to the nitroreductase family. FMN serves as cofactor.

This is Putative NADH dehydrogenase/NAD(P)H nitroreductase from Methanothermobacter thermautotrophicus (strain ATCC 29096 / DSM 1053 / JCM 10044 / NBRC 100330 / Delta H) (Methanobacterium thermoautotrophicum).